Here is a 95-residue protein sequence, read N- to C-terminus: YcgL domain-containing protein Sden_1630 (95 aa).

In terms of domain architecture, YcgL spans 1 to 85 (MICTVYKSRR…PKANLLEEHK (85 aa)).

This is YcgL domain-containing protein Sden_1630 from Shewanella denitrificans (strain OS217 / ATCC BAA-1090 / DSM 15013).